Consider the following 486-residue polypeptide: Vicilin-like seed storage protein At3g22640 (486 aa).

The signal sequence occupies residues 1-22 (MAITNKLIITLLLLISIAVVHC). The interval 34-60 (PPQQGEQEGPRRRPGGGSGEGWEEEST) is disordered. 2 consecutive Cupin type-1 domains span residues 64–223 (YHFR…ELLG) and 278–448 (FNLF…KVAE). N-linked (GlcNAc...) asparagine glycosylation is found at asparagine 168, asparagine 316, and asparagine 455.

It belongs to the 7S seed storage protein family. Predominantly expressed in the embryo and endosperm of developing seeds. Also present in seedlings.

Its function is as follows. Seed storage protein. In terms of biological role, (Microbial infection) Involved in tobacco mosaic virus (TMV) replication. Required for endoplasmic reticulum (ER) aggregations mediated by TMV main replicase (P126) upon viral infection. This chain is Vicilin-like seed storage protein At3g22640, found in Arabidopsis thaliana (Mouse-ear cress).